Here is a 279-residue protein sequence, read N- to C-terminus: uncharacterized protein (279 aa).

This is an uncharacterized protein from Acanthamoeba polyphaga mimivirus (APMV).